The chain runs to 397 residues: Elongation factor Tu (397 aa).

In terms of domain architecture, tr-type G spans 10 to 207 (KPHCNIGTIG…AVDEYIPQPE (198 aa)). A G1 region spans residues 19–26 (GHVDHGKT). 19–26 (GHVDHGKT) is a GTP binding site. Thr-26 serves as a coordination point for Mg(2+). Residues 61 to 65 (GITIS) form a G2 region. The G3 stretch occupies residues 82 to 85 (DCPG). Residues 82–86 (DCPGH) and 137–140 (NKVD) each bind GTP. The G4 stretch occupies residues 137 to 140 (NKVD). The segment at 175-177 (SAL) is G5.

Belongs to the TRAFAC class translation factor GTPase superfamily. Classic translation factor GTPase family. EF-Tu/EF-1A subfamily. In terms of assembly, monomer.

The protein localises to the cytoplasm. The catalysed reaction is GTP + H2O = GDP + phosphate + H(+). Its function is as follows. GTP hydrolase that promotes the GTP-dependent binding of aminoacyl-tRNA to the A-site of ribosomes during protein biosynthesis. In Zymomonas mobilis subsp. mobilis (strain ATCC 31821 / ZM4 / CP4), this protein is Elongation factor Tu.